We begin with the raw amino-acid sequence, 489 residues long: 5'-AMP-activated protein kinase subunit gamma-3 (489 aa).

Residues Met1 to Gly113 are disordered. Residues Ser34–Ser46 are compositionally biased toward low complexity. Residues Arg50–Arg62 show a composition bias toward basic residues. 3 CBS domains span residues Met197–Leu258, Cys280–Arg340, and Thr355–Met415. ADP is bound by residues Arg225, Met240–Asp245, Val285, His306–Arg307, and Lys325. Residues Arg225, Met240–Asp245, Val285, His306, His306–Arg307, Lys325, Thr355, Ala360, Ser381–Ala382, Ser397–Asp400, Arg424, Leu432, His453, His453–Arg454, and Ser469–Asp472 contribute to the AMP site. Residues Arg225, Met240–Asp245, Val285, His306–Arg307, Arg307, and Lys325 contribute to the ATP site. The short motif at Leu293–Val314 is the AMPK pseudosubstrate element. ADP is bound by residues Ser397–Asp400, Arg424, Leu432, and His453–Arg454. ATP is bound by residues Ser397–Asp400, Arg424, Leu432, and His453–Arg454. Positions Cys427–Ala486 constitute a CBS 4 domain.

This sequence belongs to the 5'-AMP-activated protein kinase gamma subunit family. AMPK is a heterotrimer of an alpha catalytic subunit (PRKAA1 or PRKAA2), a beta (PRKAB1 or PRKAB2) and a gamma non-catalytic subunits (PRKAG1, PRKAG2 or PRKAG3). Interacts with FNIP1 and FNIP2. Post-translationally, phosphorylated by ULK1; leading to negatively regulate AMPK activity and suggesting the existence of a regulatory feedback loop between ULK1 and AMPK. Glycosylated; O-GlcNAcylated by OGT, promoting the AMP-activated protein kinase (AMPK) activity. As to expression, skeletal muscle, with weak expression in heart and pancreas.

Its function is as follows. AMP/ATP-binding subunit of AMP-activated protein kinase (AMPK), an energy sensor protein kinase that plays a key role in regulating cellular energy metabolism. In response to reduction of intracellular ATP levels, AMPK activates energy-producing pathways and inhibits energy-consuming processes: inhibits protein, carbohydrate and lipid biosynthesis, as well as cell growth and proliferation. AMPK acts via direct phosphorylation of metabolic enzymes, and by longer-term effects via phosphorylation of transcription regulators. AMPK also acts as a regulator of cellular polarity by remodeling the actin cytoskeleton; probably by indirectly activating myosin. The AMPK gamma3 subunit is a non-catalytic subunit with a regulatory role in muscle energy metabolism. It mediates binding to AMP, ADP and ATP, leading to AMPK activation or inhibition: AMP-binding results in allosteric activation of alpha catalytic subunit (PRKAA1 or PRKAA2) both by inducing phosphorylation and preventing dephosphorylation of catalytic subunits. ADP also stimulates phosphorylation, without stimulating already phosphorylated catalytic subunit. ATP promotes dephosphorylation of catalytic subunit, rendering the AMPK enzyme inactive. In Homo sapiens (Human), this protein is 5'-AMP-activated protein kinase subunit gamma-3 (PRKAG3).